Reading from the N-terminus, the 151-residue chain is Small ribosomal subunit protein uS15 (151 aa).

The protein belongs to the universal ribosomal protein uS15 family. As to quaternary structure, component of the small ribosomal subunit. Part of the small subunit (SSU) processome, composed of more than 70 proteins and the RNA chaperone small nucleolar RNA (snoRNA) U3.

The protein localises to the cytoplasm. The protein resides in the nucleus. It is found in the nucleolus. In terms of biological role, component of the small ribosomal subunit. The ribosome is a large ribonucleoprotein complex responsible for the synthesis of proteins in the cell. Part of the small subunit (SSU) processome, first precursor of the small eukaryotic ribosomal subunit. During the assembly of the SSU processome in the nucleolus, many ribosome biogenesis factors, an RNA chaperone and ribosomal proteins associate with the nascent pre-rRNA and work in concert to generate RNA folding, modifications, rearrangements and cleavage as well as targeted degradation of pre-ribosomal RNA by the RNA exosome. The polypeptide is Small ribosomal subunit protein uS15 (rps-13) (Caenorhabditis elegans).